The primary structure comprises 423 residues: Glucose-1-phosphate adenylyltransferase (423 aa).

Alpha-D-glucose 1-phosphate contacts are provided by residues tyrosine 107, glycine 172, 187–188 (EK), and serine 205.

This sequence belongs to the bacterial/plant glucose-1-phosphate adenylyltransferase family. Homotetramer.

It catalyses the reaction alpha-D-glucose 1-phosphate + ATP + H(+) = ADP-alpha-D-glucose + diphosphate. It functions in the pathway glycan biosynthesis; glycogen biosynthesis. Functionally, involved in the biosynthesis of ADP-glucose, a building block required for the elongation reactions to produce glycogen. Catalyzes the reaction between ATP and alpha-D-glucose 1-phosphate (G1P) to produce pyrophosphate and ADP-Glc. The polypeptide is Glucose-1-phosphate adenylyltransferase (Cereibacter sphaeroides (strain ATCC 17025 / ATH 2.4.3) (Rhodobacter sphaeroides)).